The primary structure comprises 406 residues: Ribose-phosphate pyrophosphokinase 3, mitochondrial (406 aa).

The interval Met1 to Leu32 is disordered. A mitochondrion-targeting transit peptide spans Met1–Glu87. Residues Ile18–Leu32 are compositionally biased toward low complexity. Asp226 and His228 together coordinate Mg(2+). The tract at residues Gly309–Thr324 is binding of phosphoribosylpyrophosphate.

This sequence belongs to the ribose-phosphate pyrophosphokinase family.

The protein localises to the mitochondrion. It carries out the reaction D-ribose 5-phosphate + ATP = 5-phospho-alpha-D-ribose 1-diphosphate + AMP + H(+). In Spinacia oleracea (Spinach), this protein is Ribose-phosphate pyrophosphokinase 3, mitochondrial (PRS3).